Reading from the N-terminus, the 207-residue chain is Ribosomal RNA small subunit methyltransferase G (207 aa).

Residues Gly77, Phe82, 100–102 (ERS), and Arg141 each bind S-adenosyl-L-methionine.

Belongs to the methyltransferase superfamily. RNA methyltransferase RsmG family.

The protein localises to the cytoplasm. In terms of biological role, specifically methylates the N7 position of a guanine in 16S rRNA. This is Ribosomal RNA small subunit methyltransferase G from Borrelia hermsii (strain HS1 / DAH).